The sequence spans 523 residues: Acetyl-coenzyme A carboxylase carboxyl transferase subunit beta, chloroplastic (523 aa).

One can recognise a CoA carboxyltransferase N-terminal domain in the interval 224-523 (FWVICENCHK…FVPSNQNSIK (300 aa)). Residues cysteine 228, cysteine 231, cysteine 247, and cysteine 250 each coordinate Zn(2+). The C4-type zinc-finger motif lies at 228–250 (CENCHKFNYKRLFKSKMNICEEC).

The protein belongs to the AccD/PCCB family. In terms of assembly, acetyl-CoA carboxylase is a heterohexamer composed of biotin carboxyl carrier protein, biotin carboxylase and 2 subunits each of ACCase subunit alpha and ACCase plastid-coded subunit beta (accD). The cofactor is Zn(2+).

The protein resides in the plastid. Its subcellular location is the chloroplast stroma. It catalyses the reaction N(6)-carboxybiotinyl-L-lysyl-[protein] + acetyl-CoA = N(6)-biotinyl-L-lysyl-[protein] + malonyl-CoA. The protein operates within lipid metabolism; malonyl-CoA biosynthesis; malonyl-CoA from acetyl-CoA: step 1/1. In terms of biological role, component of the acetyl coenzyme A carboxylase (ACC) complex. Biotin carboxylase (BC) catalyzes the carboxylation of biotin on its carrier protein (BCCP) and then the CO(2) group is transferred by the transcarboxylase to acetyl-CoA to form malonyl-CoA. The polypeptide is Acetyl-coenzyme A carboxylase carboxyl transferase subunit beta, chloroplastic (Cucumis sativus (Cucumber)).